The following is a 210-amino-acid chain: Large ribosomal subunit protein uL4 (210 aa).

Residues 41 to 52 (MNNARQGTASSK) are compositionally biased toward polar residues. The segment at 41-80 (MNNARQGTASSKTRSEVRGGGRKPWRQKGTGRARAGSSRS) is disordered. Over residues 60 to 71 (GGRKPWRQKGTG) the composition is skewed to basic residues.

The protein belongs to the universal ribosomal protein uL4 family. Part of the 50S ribosomal subunit.

Its function is as follows. One of the primary rRNA binding proteins, this protein initially binds near the 5'-end of the 23S rRNA. It is important during the early stages of 50S assembly. It makes multiple contacts with different domains of the 23S rRNA in the assembled 50S subunit and ribosome. Functionally, forms part of the polypeptide exit tunnel. In Acaryochloris marina (strain MBIC 11017), this protein is Large ribosomal subunit protein uL4.